We begin with the raw amino-acid sequence, 409 residues long: Putative competence-damage inducible protein (409 aa).

Belongs to the CinA family.

The sequence is that of Putative competence-damage inducible protein from Clostridium botulinum (strain Kyoto / Type A2).